We begin with the raw amino-acid sequence, 347 residues long: MRIEEGLKLGFKDVLIRPKRSTLKSRSEVALERQFTFKHSGWNWSGVPIIAANMDTVGTFRMAEVLASFDILTAVHKHYTLEQWAEFVKRSPESVLRHVMVSTGTSSADFDKMKQILALSPSLKFICIDVANGYSEHFVSFLQRAREACPDKVICAGNVVTGEMVEELILSGADIVKVGIGPGSVCTTRVKTGVGYPQLSAVIECADAAHGLGGQIVSDGGCSVPGDVAKAFGGGADFVMLGGMLAGHDECEGRVVEENGEKFMLFYGMSSESAMKRHVGGVAQYRAAEGKTVKLPLRGSVDNTVRDIMGGLRSACTYVGASHLKELTKRTTFIRVAEQENRVFGTD.

108 to 131 (ADFDKMKQILALSPSLKFICIDVA) provides a ligand contact to NADP(+). The K(+) site is built by Gly-181 and Gly-183. The active-site Thioimidate intermediate is the Cys-186. 216 to 239 (IVSDGGCSVPGDVAKAFGGGADFV) lines the NADP(+) pocket.

The protein belongs to the IMPDH/GMPR family. GuaC type 1 subfamily. Homotetramer.

The catalysed reaction is IMP + NH4(+) + NADP(+) = GMP + NADPH + 2 H(+). Its function is as follows. Catalyzes the irreversible NADPH-dependent deamination of GMP to IMP. It functions in the conversion of nucleobase, nucleoside and nucleotide derivatives of G to A nucleotides, and in maintaining the intracellular balance of A and G nucleotides. The chain is GMP reductase from Yersinia pestis bv. Antiqua (strain Antiqua).